A 663-amino-acid polypeptide reads, in one-letter code: MKDLFKIYSNYQPAGDQPTAIASLIDGLESGLAKQTLLGVTGSGKTFTIAHVIQAMKRPTLIMAPNKTLAAQLYGEFKAFFPDNAVEYFVSYYDYYQPEAYVPASDTFIEKDASINEHIEQMRLSATKALIERKDAIIVATVSAIYGLGDPDSYLRMLLHLSRGEQSDQRKILKRLAEMQYTRTNLSLERGQFRVHGDVIDIFPADSEKEAIRIELFDDEVDNIARFDPLTGEILQRLPRVTIFPKTHYVTPRERILETVEKVKVELQERLAELNAQNKLVEAQRLEQRTCFDIEMMLELGYCSGIENYSRYLSNREAGEAPPTLFDYLPPEALLIIDESHVTVPQIGGMYRGDRARKETLVNYGFRLPSALDNRPLRFEEFEERSPQTIYISATPGPYEQEHSDNVAEQVVRPTGLIDPEVEIRPVKTQVDDLMSEIRQVIAQGSRILVTTLTKRMAEDLTEYLSEHGIKVRYLHSDVDTVERMEIIRDLRLGEFDVLVGINLLREGLDMPEVALVAILDADKEGFLRSERSLIQTIGRAARNVKGRAILYADTITGSMQRALTETERRREKQKAFNLEHGITPKGINKSVEDILEGAYIGKRKTVVAEKSPQYTHWSPQELVKQINALEKQMYSHAQNMEFELAAKIRDEYLLLKEQLMKI.

In terms of domain architecture, Helicase ATP-binding spans 26 to 414 (DGLESGLAKQ…DNVAEQVVRP (389 aa)). Position 39–46 (39–46 (GVTGSGKT)) interacts with ATP. Residues 92–115 (YYDYYQPEAYVPASDTFIEKDASI) carry the Beta-hairpin motif. The Helicase C-terminal domain occupies 430–596 (QVDDLMSEIR…GINKSVEDIL (167 aa)). One can recognise a UVR domain in the interval 624–659 (VKQINALEKQMYSHAQNMEFELAAKIRDEYLLLKEQ).

It belongs to the UvrB family. As to quaternary structure, forms a heterotetramer with UvrA during the search for lesions. Interacts with UvrC in an incision complex.

Its subcellular location is the cytoplasm. Its function is as follows. The UvrABC repair system catalyzes the recognition and processing of DNA lesions. A damage recognition complex composed of 2 UvrA and 2 UvrB subunits scans DNA for abnormalities. Upon binding of the UvrA(2)B(2) complex to a putative damaged site, the DNA wraps around one UvrB monomer. DNA wrap is dependent on ATP binding by UvrB and probably causes local melting of the DNA helix, facilitating insertion of UvrB beta-hairpin between the DNA strands. Then UvrB probes one DNA strand for the presence of a lesion. If a lesion is found the UvrA subunits dissociate and the UvrB-DNA preincision complex is formed. This complex is subsequently bound by UvrC and the second UvrB is released. If no lesion is found, the DNA wraps around the other UvrB subunit that will check the other stand for damage. The chain is UvrABC system protein B from Legionella pneumophila subsp. pneumophila (strain Philadelphia 1 / ATCC 33152 / DSM 7513).